A 100-amino-acid polypeptide reads, in one-letter code: MLNSNNHQTEWKWPRLIQIMEIGNSAMKNTMSKTLYMSYNFIARTSGKTYHAPVLVVDCSVNEGWLWMRICHNCLGCLCTGYWAAQRTFATTTGLRLVWL.

This is an uncharacterized protein from Mycoplasma pneumoniae (strain ATCC 29342 / M129 / Subtype 1) (Mycoplasmoides pneumoniae).